Consider the following 296-residue polypeptide: Elongation factor Ts (296 aa).

The segment at 82–85 (TDFV) is involved in Mg(2+) ion dislocation from EF-Tu.

The protein belongs to the EF-Ts family.

It localises to the cytoplasm. Associates with the EF-Tu.GDP complex and induces the exchange of GDP to GTP. It remains bound to the aminoacyl-tRNA.EF-Tu.GTP complex up to the GTP hydrolysis stage on the ribosome. The protein is Elongation factor Ts of Coxiella burnetii (strain CbuG_Q212) (Coxiella burnetii (strain Q212)).